A 651-amino-acid polypeptide reads, in one-letter code: Acetyl-coenzyme A synthetase (651 aa).

CoA-binding positions include R190–R193, T309, and N333. ATP-binding positions include G385 to P387, D409 to T414, D498, and R513. S521 is a CoA binding site. An ATP-binding site is contributed by R524. Mg(2+) contacts are provided by V535, H537, and V540. R582 contacts CoA. Position 607 is an N6-acetyllysine (K607).

This sequence belongs to the ATP-dependent AMP-binding enzyme family. Mg(2+) is required as a cofactor. Acetylated. Deacetylation by the SIR2-homolog deacetylase activates the enzyme.

The catalysed reaction is acetate + ATP + CoA = acetyl-CoA + AMP + diphosphate. Functionally, catalyzes the conversion of acetate into acetyl-CoA (AcCoA), an essential intermediate at the junction of anabolic and catabolic pathways. AcsA undergoes a two-step reaction. In the first half reaction, AcsA combines acetate with ATP to form acetyl-adenylate (AcAMP) intermediate. In the second half reaction, it can then transfer the acetyl group from AcAMP to the sulfhydryl group of CoA, forming the product AcCoA. The protein is Acetyl-coenzyme A synthetase of Xanthobacter autotrophicus (strain ATCC BAA-1158 / Py2).